Consider the following 138-residue polypeptide: Transcription antitermination protein NusB (138 aa).

It belongs to the NusB family.

In terms of biological role, involved in transcription antitermination. Required for transcription of ribosomal RNA (rRNA) genes. Binds specifically to the boxA antiterminator sequence of the ribosomal RNA (rrn) operons. The polypeptide is Transcription antitermination protein NusB (Serratia proteamaculans (strain 568)).